A 651-amino-acid polypeptide reads, in one-letter code: Probable potassium transport system protein Kup (651 aa).

12 helical membrane passes run 41–61, 82–102, 130–150, 163–183, 194–214, 235–255, 276–296, 309–329, 366–386, 395–415, 426–446, and 450–470; these read LVLG…IYAF, VVSF…VLFV, LILG…VITP, IVAP…LVTL, VAIV…ASGL, FLTV…LAMT, WLWI…AFIL, MIPS…TVIA, IYIP…VLGF, AYGI…YIVM, ALPI…ANII, and EGGW…WTWV.

This sequence belongs to the HAK/KUP transporter (TC 2.A.72) family.

The protein resides in the cell inner membrane. The enzyme catalyses K(+)(in) + H(+)(in) = K(+)(out) + H(+)(out). Functionally, transport of potassium into the cell. Likely operates as a K(+):H(+) symporter. The polypeptide is Probable potassium transport system protein Kup (Brucella ovis (strain ATCC 25840 / 63/290 / NCTC 10512)).